The sequence spans 236 residues: DPNLKYGGTDIAVIGPPSRDKFLRLNFQSSRGTVSLGLKRENLYVVAYLAMDNANVNRAYYFGTEITSAELTTLLPEATVANQKALEYTEDYQSIEKNAKITEGDKTRKELGLGINLLSTLMDAVNKKARVVKNEARFLLIAIQMTAEAARFRYIQNLVTKNFPNKFNSEDKVIQFQVNWSKISKAIYGDAKNGVFNKDYDFGFGKVRQVKDLQMGLLMYLGTTPNNAADRYRAEL.

E148 is an active-site residue.

Belongs to the ribosome-inactivating protein family. Type 1 RIP subfamily.

The enzyme catalyses Endohydrolysis of the N-glycosidic bond at one specific adenosine on the 28S rRNA.. Functionally, ribosome-inactivating protein of type 1, inhibits protein synthesis in animal cells. Useful as immunotoxin for pharmacological applications. This chain is Ribosome-inactivating protein saporin-3 (SAP3), found in Saponaria officinalis (Common soapwort).